Reading from the N-terminus, the 652-residue chain is DNA ligase (652 aa).

NAD(+) is bound by residues 29-33, 78-79, and Glu107; these read DSEYD and SL. The N6-AMP-lysine intermediate role is filled by Lys109. Residues Arg130, Glu164, Lys278, and Lys302 each contribute to the NAD(+) site. Residues Cys395, Cys398, Cys413, and Cys418 each coordinate Zn(2+). Residues 577–652 form the BRCT domain; it reads VADAALSGLT…VRDEAWLESL (76 aa).

Belongs to the NAD-dependent DNA ligase family. LigA subfamily. It depends on Mg(2+) as a cofactor. Mn(2+) serves as cofactor.

It carries out the reaction NAD(+) + (deoxyribonucleotide)n-3'-hydroxyl + 5'-phospho-(deoxyribonucleotide)m = (deoxyribonucleotide)n+m + AMP + beta-nicotinamide D-nucleotide.. In terms of biological role, DNA ligase that catalyzes the formation of phosphodiester linkages between 5'-phosphoryl and 3'-hydroxyl groups in double-stranded DNA using NAD as a coenzyme and as the energy source for the reaction. It is essential for DNA replication and repair of damaged DNA. The sequence is that of DNA ligase from Streptococcus pneumoniae (strain Taiwan19F-14).